We begin with the raw amino-acid sequence, 158 residues long: NADH-quinone oxidoreductase subunit B (158 aa).

The [4Fe-4S] cluster site is built by Cys37, Cys38, Cys102, and Cys132.

Belongs to the complex I 20 kDa subunit family. NDH-1 is composed of 14 different subunits. Subunits NuoB, C, D, E, F, and G constitute the peripheral sector of the complex. It depends on [4Fe-4S] cluster as a cofactor.

Its subcellular location is the cell inner membrane. The catalysed reaction is a quinone + NADH + 5 H(+)(in) = a quinol + NAD(+) + 4 H(+)(out). Functionally, NDH-1 shuttles electrons from NADH, via FMN and iron-sulfur (Fe-S) centers, to quinones in the respiratory chain. Couples the redox reaction to proton translocation (for every two electrons transferred, four hydrogen ions are translocated across the cytoplasmic membrane), and thus conserves the redox energy in a proton gradient. The sequence is that of NADH-quinone oxidoreductase subunit B from Leptothrix cholodnii (strain ATCC 51168 / LMG 8142 / SP-6) (Leptothrix discophora (strain SP-6)).